The primary structure comprises 33 residues: Photosystem II reaction center protein Psb30 (33 aa).

Residues 5–25 (LALTLVSLVLVVSAGPLVVVL) traverse the membrane as a helical segment.

This sequence belongs to the Psb30/Ycf12 family. As to quaternary structure, PSII is composed of 1 copy each of membrane proteins PsbA, PsbB, PsbC, PsbD, PsbE, PsbF, PsbH, PsbI, PsbJ, PsbK, PsbL, PsbM, PsbT, PsbX, PsbY, PsbZ, Psb30/Ycf12, peripheral proteins of the oxygen-evolving complex and a large number of cofactors. It forms dimeric complexes.

It localises to the plastid. The protein localises to the chloroplast thylakoid membrane. A core subunit of photosystem II (PSII), required for optimal photosynthesis, probably helps stabilize the reaction center. The chain is Photosystem II reaction center protein Psb30 from Chlamydomonas reinhardtii (Chlamydomonas smithii).